Consider the following 223-residue polypeptide: Translation initiation factor 6 (223 aa).

This sequence belongs to the eIF-6 family.

Functionally, binds to the 50S ribosomal subunit and prevents its association with the 30S ribosomal subunit to form the 70S initiation complex. The chain is Translation initiation factor 6 from Thermofilum pendens (strain DSM 2475 / Hrk 5).